A 249-amino-acid chain; its full sequence is Nodulation protein H (249 aa).

Functionally, required for the formation of sulfated nod factor. Proposed to transfer activated sulfate (PAPS) to a N-acetylglucosamine of the nod factor. In Rhizobium tropici, this protein is Nodulation protein H (nodH).